The sequence spans 475 residues: Bystin (475 aa).

Basic residues-rich tracts occupy residues 1–12 (MGKDVKKVHKLR) and 29–41 (KPHK…RKKK). Disordered stretches follow at residues 1 to 57 (MGKD…ESVI) and 106 to 149 (DFID…QFGV). 2 stretches are compositionally biased toward acidic residues: residues 45–54 (ENDTGIDETE) and 107–119 (FIDD…DADQ).

Belongs to the bystin family.

Its subcellular location is the nucleus. The protein resides in the nucleolus. Functionally, required for processing of 20S pre-rRNA precursor and biogenesis of 40S ribosomal subunits. The polypeptide is Bystin (bysl) (Dictyostelium discoideum (Social amoeba)).